The chain runs to 345 residues: Protein RecA (345 aa).

Residue 67–74 (GPESSGKT) participates in ATP binding.

Belongs to the RecA family.

The protein resides in the cytoplasm. In terms of biological role, can catalyze the hydrolysis of ATP in the presence of single-stranded DNA, the ATP-dependent uptake of single-stranded DNA by duplex DNA, and the ATP-dependent hybridization of homologous single-stranded DNAs. It interacts with LexA causing its activation and leading to its autocatalytic cleavage. The polypeptide is Protein RecA (Acidothermus cellulolyticus (strain ATCC 43068 / DSM 8971 / 11B)).